A 418-amino-acid chain; its full sequence is Tyrosine--tRNA ligase (418 aa).

Y34 serves as a coordination point for L-tyrosine. The 'HIGH' region motif lies at 39-48 (PTADSLHLGH). Y169 and Q173 together coordinate L-tyrosine. The short motif at 229-233 (KFGKS) is the 'KMSKS' region element. Residue K232 participates in ATP binding. One can recognise an S4 RNA-binding domain in the interval 352–418 (HNIVELLVTA…GKKKYFVLTY (67 aa)).

Belongs to the class-I aminoacyl-tRNA synthetase family. TyrS type 1 subfamily. Homodimer.

The protein resides in the cytoplasm. It carries out the reaction tRNA(Tyr) + L-tyrosine + ATP = L-tyrosyl-tRNA(Tyr) + AMP + diphosphate + H(+). Its function is as follows. Catalyzes the attachment of tyrosine to tRNA(Tyr) in a two-step reaction: tyrosine is first activated by ATP to form Tyr-AMP and then transferred to the acceptor end of tRNA(Tyr). This is Tyrosine--tRNA ligase from Streptococcus mutans serotype c (strain ATCC 700610 / UA159).